Here is a 1358-residue protein sequence, read N- to C-terminus: Mediator of RNA polymerase II transcription subunit 12 (1358 aa).

The protein belongs to the Mediator complex subunit 12 family. In terms of assembly, component of the SRB8-11 complex, which itself associates with the Mediator complex.

It is found in the nucleus. Its function is as follows. Component of the SRB8-11 complex. The SRB8-11 complex is a regulatory module of the Mediator complex which is itself involved in regulation of basal and activated RNA polymerase II-dependent transcription. The SRB8-11 complex may be involved in the transcriptional repression of a subset of genes regulated by Mediator. It may inhibit the association of the Mediator complex with RNA polymerase II to form the holoenzyme complex. The chain is Mediator of RNA polymerase II transcription subunit 12 (SRB8) from Candida glabrata (strain ATCC 2001 / BCRC 20586 / JCM 3761 / NBRC 0622 / NRRL Y-65 / CBS 138) (Yeast).